A 117-amino-acid chain; its full sequence is NADH-ubiquinone oxidoreductase chain 3 (117 aa).

3 helical membrane passes run 3–23, 56–76, and 85–105; these read LLLTILFITTILSLILAIVSF, FFLVAILFLLFDLEIALLLPL, and PMFTLLWASALLIMLTLGLIY.

The protein belongs to the complex I subunit 3 family.

It is found in the mitochondrion membrane. The enzyme catalyses a ubiquinone + NADH + 5 H(+)(in) = a ubiquinol + NAD(+) + 4 H(+)(out). Its function is as follows. Core subunit of the mitochondrial membrane respiratory chain NADH dehydrogenase (Complex I) that is believed to belong to the minimal assembly required for catalysis. Complex I functions in the transfer of electrons from NADH to the respiratory chain. The immediate electron acceptor for the enzyme is believed to be ubiquinone. The protein is NADH-ubiquinone oxidoreductase chain 3 (MT-ND3) of Tetraodon nigroviridis (Spotted green pufferfish).